The sequence spans 711 residues: K(+)-insensitive pyrophosphate-energized proton pump (711 aa).

Helical transmembrane passes span L7 to F27, I58 to L78, A85 to L105, L145 to L165, and I179 to I199. K202 lines the substrate pocket. The Mg(2+) site is built by D205, D209, and D235. The next 6 helical transmembrane spans lie at T251–W271, I274–F294, G311–L331, Y343–L363, L403–I423, and L431–M451. D459 is a Mg(2+) binding site. 4 helical membrane-spanning segments follow: residues Y495–V515, E535–I555, E602–G622, and E624–L644. Residues D652, D678, and D682 each contribute to the Ca(2+) site. K685 is a binding site for substrate. The chain crosses the membrane as a helical span at residues P690 to F710.

This sequence belongs to the H(+)-translocating pyrophosphatase (TC 3.A.10) family. K(+)-insensitive subfamily. As to quaternary structure, homodimer. Mg(2+) is required as a cofactor.

Its subcellular location is the cell membrane. The enzyme catalyses diphosphate + H2O + H(+)(in) = 2 phosphate + 2 H(+)(out). Functionally, proton pump that utilizes the energy of pyrophosphate hydrolysis as the driving force for proton movement across the membrane. Generates a proton motive force. The sequence is that of K(+)-insensitive pyrophosphate-energized proton pump from Caldanaerobacter subterraneus subsp. tengcongensis (strain DSM 15242 / JCM 11007 / NBRC 100824 / MB4) (Thermoanaerobacter tengcongensis).